Reading from the N-terminus, the 444-residue chain is Zinc finger protein ZIC 1 (444 aa).

The segment at 222–257 (LICKWIEPEQLANPKKSCNKTFSTMHELVTHVTVEH) adopts a C2H2-type 1 zinc-finger fold. A C2H2-type 2; degenerate zinc finger spans residues 271–293 (EECPREGKPFKAKYKLVNHIRVH). 3 C2H2-type zinc fingers span residues 299 to 323 (FPCP…KRTH), 329 to 353 (FKCE…MHVH), and 359 to 381 (YLCK…MKVH). The tract at residues 372 to 432 (SSLRKHMKVH…SSAGHHTASH (61 aa)) is disordered. The span at 383 to 432 (SSSQGSQPSPAASSGYESSTPPTIVSPSTENQTASSLSPSSSAGHHTASH) shows a compositional bias: low complexity.

Belongs to the GLI C2H2-type zinc-finger protein family.

It localises to the nucleus. The protein localises to the cytoplasm. Acts as a transcriptional activator. Involved in neurogenesis. Plays important roles in the early stage of organogenesis of the CNS, as well as during dorsal spinal cord development and maturation of the cerebellum. Binds to the minimal GLI-consensus sequence 5'-TGGGTGGTC-3'. The protein is Zinc finger protein ZIC 1 (ZIC1) of Gallus gallus (Chicken).